The primary structure comprises 184 residues: MGISDQINSNLSSQSPFTVSTNPSDSMFLPTNRIAKTADWKEEKKYYYPKESIQSIYEGTTVRIVIDKQNGRLYGLEMVVEIGPLTANGATFTRLCRDVAHSMAYSVSIWNGNNEIHRLHMDHERIEMVLTKLKHERDMEDKMAGYYDDATRTALGATKQKLIFDLNFFHTVHTSDALYLNAWH.

The segment at 1–24 (MGISDQINSNLSSQSPFTVSTNPS) is disordered.

This is an uncharacterized protein from Dictyostelium discoideum (Social amoeba).